The following is a 481-amino-acid chain: Lincomycin resistance protein (481 aa).

Helical transmembrane passes span 30–50 (WVTL…VTVV), 67–87 (QLTW…MVGG), 99–119 (LLFG…APNL), 127–147 (FGQG…IACS), 162–182 (VASV…QLFS), 185–205 (WIFL…LLLV), 215–235 (PVDL…IFGV), 245–265 (LPLA…FVAV), 285–305 (LVAN…FFLL), 318–338 (IEAG…CVLV), 340–360 (GLIE…LAGP), 374–394 (LLTS…GLVA), 421–441 (LGGA…HLGG), and 446–466 (FTVA…AVLA).

This sequence belongs to the major facilitator superfamily. TCR/Tet family.

Its subcellular location is the cell membrane. Functionally, proton-dependent transporter. May mediate the efflux of lincomycin. The sequence is that of Lincomycin resistance protein (lmrA) from Streptomyces lincolnensis.